The following is a 193-amino-acid chain: Xanthine phosphoribosyltransferase (193 aa).

Leu-20 and Thr-27 together coordinate xanthine. A 5-phospho-alpha-D-ribose 1-diphosphate-binding site is contributed by Ala-128–Ala-132. Lys-156 provides a ligand contact to xanthine.

The protein belongs to the purine/pyrimidine phosphoribosyltransferase family. Xpt subfamily. Homodimer.

The protein localises to the cytoplasm. It carries out the reaction XMP + diphosphate = xanthine + 5-phospho-alpha-D-ribose 1-diphosphate. The protein operates within purine metabolism; XMP biosynthesis via salvage pathway; XMP from xanthine: step 1/1. Its function is as follows. Converts the preformed base xanthine, a product of nucleic acid breakdown, to xanthosine 5'-monophosphate (XMP), so it can be reused for RNA or DNA synthesis. This Streptococcus gordonii (strain Challis / ATCC 35105 / BCRC 15272 / CH1 / DL1 / V288) protein is Xanthine phosphoribosyltransferase.